A 128-amino-acid chain; its full sequence is Small ribosomal subunit protein uS13 (128 aa).

A compositionally biased stretch (basic residues) spans Gly-95–Val-118. The interval Gly-95–Ala-128 is disordered.

Belongs to the universal ribosomal protein uS13 family. Part of the 30S ribosomal subunit. Forms a loose heterodimer with protein S19. Forms two bridges to the 50S subunit in the 70S ribosome.

In terms of biological role, located at the top of the head of the 30S subunit, it contacts several helices of the 16S rRNA. In the 70S ribosome it contacts the 23S rRNA (bridge B1a) and protein L5 of the 50S subunit (bridge B1b), connecting the 2 subunits; these bridges are implicated in subunit movement. Contacts the tRNAs in the A and P-sites. This is Small ribosomal subunit protein uS13 from Anaeromyxobacter sp. (strain K).